A 172-amino-acid chain; its full sequence is Signal peptidase complex catalytic subunit SEC11 (172 aa).

Residues 1–14 (MLSSLQNPRQAAAQ) are Cytoplasmic-facing. Residues 15–35 (LMNFAMILSTAFMMWKGLSVA) form a helical; Signal-anchor for type II membrane protein membrane-spanning segment. At 36-172 (TDSPSPIVVV…MGLLVVIQRE (137 aa)) the chain is on the lumenal side. Catalysis depends on charge relay system residues S49, H90, and D115. The C-terminal short (CTS) helix stretch occupies residues 158-169 (VMLGIMGLLVVI).

The protein belongs to the peptidase S26B family. As to quaternary structure, component of the signal peptidase complex (SPC) composed of a catalytic subunit SEC11 and three accessory subunits SPC1, SPC2 and SPC3. The complex induces a local thinning of the ER membrane which is used to measure the length of the signal peptide (SP) h-region of protein substrates. This ensures the selectivity of the complex towards h-regions shorter than 18-20 amino acids. SPC associates with the translocon complex.

It localises to the endoplasmic reticulum membrane. The enzyme catalyses Cleavage of hydrophobic, N-terminal signal or leader sequences from secreted and periplasmic proteins.. In terms of biological role, catalytic component of the signal peptidase complex (SPC) which catalyzes the cleavage of N-terminal signal sequences from nascent proteins as they are translocated into the lumen of the endoplasmic reticulum. Specifically cleaves N-terminal signal peptides that contain a hydrophobic alpha-helix (h-region) shorter than 18-20 amino acids. This is Signal peptidase complex catalytic subunit SEC11 (SEC11) from Metarhizium robertsii (strain ARSEF 23 / ATCC MYA-3075) (Metarhizium anisopliae (strain ARSEF 23)).